The sequence spans 114 residues: Peroxisomal biogenesis factor 39 (114 aa).

Disordered stretches follow at residues 1 to 26 (MSWW…AEPA) and 53 to 114 (ITAT…PRVS). Serine 102 carries the phosphoserine modification.

Its subcellular location is the peroxisome. In terms of biological role, may be a peroxin involved in the PTS2-mediated protein import pathway. This chain is Peroxisomal biogenesis factor 39 (Pex39), found in Mus musculus (Mouse).